The following is a 798-amino-acid chain: Cold shock domain-containing protein E1 (798 aa).

Residue methionine 1 is modified to N-acetylmethionine. Residues glutamate 26–leucine 87 enclose the CSD 1 domain. At lysine 81 the chain carries N6-acetyllysine. Residue lysine 91 forms a Glycyl lysine isopeptide (Lys-Gly) (interchain with G-Cter in SUMO2) linkage. Serine 123 is subject to Phosphoserine. In terms of domain architecture, CSD 2; truncated spans valine 136–leucine 179. The CSD 3 domain maps to cysteine 186 to valine 245. Position 276 is a phosphoserine (serine 276). Residues leucine 297–leucine 337 form the CSD 4; truncated domain. CSD domains are found at residues glutamate 349–isoleucine 410 and asparagine 447–valine 507. Position 514 is a phosphoserine (serine 514). One can recognise a CSD 7 domain in the interval leucine 519–valine 579. Residue serine 584 is modified to Phosphoserine. CSD domains follow at residues proline 610–isoleucine 670 and arginine 674–valine 735. Residues proline 748–arginine 789 enclose the SUZ-C domain. At threonine 761 the chain carries Phosphothreonine.

It belongs to the UNR family. As to quaternary structure, component of a multi subunit autoregulatory ribonucleoprotein complex (ARC), at least composed of IGF2BP1, PABPC1 and CSDE1. Interacts with STRAP. Part of a complex associated with the FOS mCRD domain and consisting of PABPC1, PAIP1, HNRPD and SYNCRIP. The interaction with PABPC1 is direct and RNA-independent. Interacts with EIF4ENIF1/4E-T.

Its subcellular location is the cytoplasm. It is found in the stress granule. The protein localises to the P-body. RNA-binding protein involved in translationally coupled mRNA turnover. Implicated with other RNA-binding proteins in the cytoplasmic deadenylation/translational and decay interplay of the FOS mRNA mediated by the major coding-region determinant of instability (mCRD) domain. Required for efficient formation of stress granules. Its function is as follows. (Microbial infection) Required for internal initiation of translation of human rhinovirus RNA. The chain is Cold shock domain-containing protein E1 from Homo sapiens (Human).